Here is a 217-residue protein sequence, read N- to C-terminus: Membrane-spanning 4-domains subfamily A member 6C (217 aa).

Polar residues predominate over residues 1-20 (MIPQVVTNETITTISPNGIN). The tract at residues 1–33 (MIPQVVTNETITTISPNGINFPQKDESQPTQQR) is disordered. At 1 to 46 (MIPQVVTNETITTISPNGINFPQKDESQPTQQRQDSLKKHLKAEIK) the chain is on the cytoplasmic side. Residues 47 to 67 (VIVAIQIMCAVTVLALGIILA) form a helical membrane-spanning segment. At 68 to 84 (SVPPVPYFNSVFSVLLK) the chain is on the extracellular side. The chain crosses the membrane as a helical span at residues 85–105 (SGYPFIGALFFIASGILSIIT). Over 106 to 121 (ERKSTKPLVDASLTLN) the chain is Cytoplasmic. The chain crosses the membrane as a helical span at residues 122-142 (ILSVSFAFVGIIIISVSLAGL). The Extracellular portion of the chain corresponds to 143–186 (HPASEQCKQSKELSLIEHDYYQPFYNSDRSECAVTKSILTGALS). Residues 187 to 207 (VMLIISVLELGLALLSAMLWL) form a helical membrane-spanning segment. Topologically, residues 208-217 (REGVLTSLRM) are cytoplasmic.

It belongs to the MS4A family. As to expression, expressed only by thymus, spleen, peripheral lymph node and bone marrow.

It is found in the membrane. Functionally, may be involved in signal transduction as a component of a multimeric receptor complex. In Mus musculus (Mouse), this protein is Membrane-spanning 4-domains subfamily A member 6C (Ms4a6c).